Consider the following 870-residue polypeptide: Serine protease DegP homolog (870 aa).

A signal peptide spans Met1–Thr29. The interval Lys128 to Lys151 is disordered. Positions Pro138–Lys151 are enriched in basic residues. Residues His328, Asp359, and Ser437 each act as charge relay system in the active site.

Belongs to the peptidase S1C family. Oligomer; may form trimers or hexamers. Forms a complex at least composed of DegP, ENO and HSP70.

It localises to the cytoplasm. Its subcellular location is the parasitophorous vacuole. The protein resides in the host cell membrane. The protein localises to the host cytoplasm. Serine protease which also acts as a protein chaperone. Plays a role in the parasite development in host erythrocytes possibly by protecting it against thermal and oxidative stresses. This Plasmodium falciparum (isolate 3D7) protein is Serine protease DegP homolog.